The primary structure comprises 823 residues: Aminopeptidase O (823 aa).

Histidine 481 contributes to the Zn(2+) binding site. The Proton acceptor role is filled by glutamate 482. Positions 485 and 504 each coordinate Zn(2+). A Nucleolar localization signal motif is present at residues 693–703 (RRPRKRKRGKR).

This sequence belongs to the peptidase M1 family. The cofactor is Zn(2+). Expressed in testis, heart, brain, lung, liver, skeletal muscle, kidney and ovary. Expressed in vascular tissues.

Its subcellular location is the nucleus. The protein localises to the nucleolus. The protein resides in the cytoplasm. In terms of biological role, aminopeptidase which catalyzes the hydrolysis of amino acid residues from the N-terminus of peptide or protein substrates. In Mus musculus (Mouse), this protein is Aminopeptidase O (Aopep).